We begin with the raw amino-acid sequence, 266 residues long: GTP cyclohydrolase FolE2 1 (266 aa).

The protein belongs to the GTP cyclohydrolase IV family.

The catalysed reaction is GTP + H2O = 7,8-dihydroneopterin 3'-triphosphate + formate + H(+). The protein operates within cofactor biosynthesis; 7,8-dihydroneopterin triphosphate biosynthesis; 7,8-dihydroneopterin triphosphate from GTP: step 1/1. In terms of biological role, converts GTP to 7,8-dihydroneopterin triphosphate. The chain is GTP cyclohydrolase FolE2 1 from Dechloromonas aromatica (strain RCB).